The chain runs to 55 residues: U2-theraphotoxin-Cg1a (55 aa).

Residues 1-19 (DSPAWLKSMERIFQSEERE) constitute a propeptide that is removed on maturation. 3 disulfide bridges follow: Cys-20/Cys-34, Cys-27/Cys-39, and Cys-33/Cys-47.

The protein belongs to the neurotoxin 10 (Hwtx-1) family. 06 (F4b) subfamily. As to expression, expressed by the venom gland.

It localises to the secreted. Its function is as follows. Probable ion channel inhibitor. The sequence is that of U2-theraphotoxin-Cg1a from Chilobrachys guangxiensis (Chinese earth tiger tarantula).